A 165-amino-acid polypeptide reads, in one-letter code: Transcription antitermination protein NusB (165 aa).

It belongs to the NusB family.

Functionally, involved in transcription antitermination. Required for transcription of ribosomal RNA (rRNA) genes. Binds specifically to the boxA antiterminator sequence of the ribosomal RNA (rrn) operons. The chain is Transcription antitermination protein NusB from Chlorobium phaeobacteroides (strain DSM 266 / SMG 266 / 2430).